A 231-amino-acid polypeptide reads, in one-letter code: Pathogenesis-related thaumatin-like protein 3.7 (231 aa).

The N-terminal stretch at 1 to 27 (MATVSDLALLLVAGLVAISLHMQEAGA) is a signal peptide. 8 disulfide bridges follow: C36/C230, C77/C87, C92/C98, C143/C218, C148/C201, C156/C166, C170/C179, and C180/C188.

This sequence belongs to the thaumatin family.

Its function is as follows. May be involved in disease resistance. The chain is Pathogenesis-related thaumatin-like protein 3.7 from Cryptomeria japonica (Japanese cedar).